The sequence spans 497 residues: Probable pyruvate kinase, cytosolic isozyme (497 aa).

Substrate is bound at residue arginine 37. Positions 39, 41, 71, and 72 each coordinate K(+). 39-42 (NFSH) provides a ligand contact to ATP. 2 residues coordinate ATP: arginine 78 and lysine 163. Lysine 227 is a substrate binding site. Residue glutamate 229 participates in Mg(2+) binding. 3 residues coordinate substrate: glycine 252, aspartate 253, and threonine 285. Aspartate 253 serves as a coordination point for Mg(2+).

Belongs to the pyruvate kinase family. As to quaternary structure, homotetramer. Mg(2+) is required as a cofactor. K(+) serves as cofactor.

Its subcellular location is the cytoplasm. It localises to the cytosol. The enzyme catalyses pyruvate + ATP = phosphoenolpyruvate + ADP + H(+). Its pathway is carbohydrate degradation; glycolysis; pyruvate from D-glyceraldehyde 3-phosphate: step 5/5. Key regulatory enzyme of the glycolytic pathway that catalyzes the final step of glycolysis, converting ADP and phosphoenolpyruvate (PEP) to ATP and pyruvate by essentially irreversible transphosphorylation. The chain is Probable pyruvate kinase, cytosolic isozyme from Arabidopsis thaliana (Mouse-ear cress).